Consider the following 110-residue polypeptide: uncharacterized protein (110 aa).

The protein resides in the plastid. It is found in the chloroplast. This is an uncharacterized protein from Auxenochlorella pyrenoidosa (Freshwater green alga).